The chain runs to 308 residues: Polyprenal reductase (308 aa).

Over 1-2 (MT) the chain is Cytoplasmic. The helical transmembrane segment at 3–23 (LLALVWLLLDATFLITLLWHL) threads the bilayer. Residues 24-65 (LQGCKSGHSLLCSVFQDLIRYGKTKTGLQRPAWLQWFDIPKR) lie on the Lumenal side of the membrane. A helical transmembrane segment spans residues 66–86 (CFWHFYCVSLIWNGCLLWILL). At 87-120 (RLLLQSVPVPEWLQLVLHFLHAGSEPQILDRELS) the chain is on the cytoplasmic side. A helical membrane pass occupies residues 121–141 (VILALALLWLHSLRRLLECLF). The Lumenal portion of the chain corresponds to 142–148 (VSVFSNG). A helical membrane pass occupies residues 149–169 (VIHLVQYCFGLGYYFLIGITV). Residues 170-184 (LTYCPLDRRTVSTDN) are Cytoplasmic-facing. A helical membrane pass occupies residues 185-205 (LLTQCHWYHILGLALYIWASL). The Lumenal segment spans residues 206–255 (HQYRCHCILAGLRKSASGNVINLNHSVPCGDWFERVSCPHYFAELLIYVS). Residues 256 to 276 (IAVVFGLLNTIWWLVVLYVLL) form a helical membrane-spanning segment. Topologically, residues 277–308 (NQALAALLCHEFYHEKFDTYPIHRKAFIPFIF) are cytoplasmic.

This sequence belongs to the steroid 5-alpha reductase family. Polyprenal reductase subfamily.

Its subcellular location is the endoplasmic reticulum membrane. It catalyses the reaction a di-trans,poly-cis-dolichal + NADP(+) = a di-trans,poly-cis-polyprenal + NADPH + H(+). The catalysed reaction is a 3-oxo-5alpha-steroid + NADP(+) = a 3-oxo-Delta(4)-steroid + NADPH + H(+). It carries out the reaction androst-4-ene-3,17-dione + NADPH + H(+) = 5alpha-androstan-3,17-dione + NADP(+). The enzyme catalyses 17beta-hydroxy-5alpha-androstan-3-one + NADP(+) = testosterone + NADPH + H(+). Its pathway is protein modification; protein glycosylation. Its function is as follows. Plays a key role in early steps of protein N-linked glycosylation by being involved in the conversion of polyprenol into dolichol. Acts as a polyprenal reductase that mediates the reduction of polyprenal into dolichal in a NADP-dependent mechanism. Dolichols are required for the synthesis of dolichol-linked monosaccharides and the oligosaccharide precursor used for N-glycosylation. Also able to convert testosterone (T) into 5-alpha-dihydrotestosterone (DHT). The chain is Polyprenal reductase (srd5a3) from Xenopus tropicalis (Western clawed frog).